Here is a 34-residue protein sequence, read N- to C-terminus: Small ribosomal subunit protein uS2c (34 aa).

It belongs to the universal ribosomal protein uS2 family.

Its subcellular location is the plastid. The protein resides in the chloroplast. This chain is Small ribosomal subunit protein uS2c (rps2), found in Ochrosphaera neapolitana.